We begin with the raw amino-acid sequence, 485 residues long: D-alanine--D-alanyl carrier protein ligase (485 aa).

ATP is bound at residue 144 to 145; the sequence is TS. Asp189 contributes to the D-alanine binding site. 284-289 lines the ATP pocket; that stretch reads NTYGPT. Val293 is a binding site for D-alanine. Positions 365 and 473 each coordinate ATP. A D-alanine-binding site is contributed by Lys473.

The protein belongs to the ATP-dependent AMP-binding enzyme family. DltA subfamily.

Its subcellular location is the cytoplasm. It catalyses the reaction holo-[D-alanyl-carrier protein] + D-alanine + ATP = D-alanyl-[D-alanyl-carrier protein] + AMP + diphosphate. The protein operates within cell wall biogenesis; lipoteichoic acid biosynthesis. In terms of biological role, catalyzes the first step in the D-alanylation of lipoteichoic acid (LTA), the activation of D-alanine and its transfer onto the D-alanyl carrier protein (Dcp) DltC. In an ATP-dependent two-step reaction, forms a high energy D-alanyl-AMP intermediate, followed by transfer of the D-alanyl residue as a thiol ester to the phosphopantheinyl prosthetic group of the Dcp. D-alanylation of LTA plays an important role in modulating the properties of the cell wall in Gram-positive bacteria, influencing the net charge of the cell wall. This is D-alanine--D-alanyl carrier protein ligase from Staphylococcus aureus (strain USA300).